The sequence spans 49 residues: Large ribosomal subunit protein bL33B (49 aa).

It belongs to the bacterial ribosomal protein bL33 family.

The protein is Large ribosomal subunit protein bL33B of Shouchella clausii (strain KSM-K16) (Alkalihalobacillus clausii).